We begin with the raw amino-acid sequence, 55 residues long: Small ribosomal subunit protein bS21 (55 aa).

It belongs to the bacterial ribosomal protein bS21 family.

In Phytoplasma mali (strain AT), this protein is Small ribosomal subunit protein bS21.